Reading from the N-terminus, the 509-residue chain is Maturase K (509 aa).

Belongs to the intron maturase 2 family. MatK subfamily.

The protein localises to the plastid. Its subcellular location is the chloroplast. Functionally, usually encoded in the trnK tRNA gene intron. Probably assists in splicing its own and other chloroplast group II introns. The polypeptide is Maturase K (Amentotaxus argotaenia (Chinese flowering yew)).